A 197-amino-acid polypeptide reads, in one-letter code: Holliday junction branch migration complex subunit RuvA (197 aa).

Residues 1–64 (MYEYIKGKYI…EDFIGIYGFL (64 aa)) form a domain I region. The tract at residues 65–143 (TKDELSMFKL…IDISEEDDEQ (79 aa)) is domain II. A flexible linker region spans residues 144 to 148 (IINKV). The interval 149–197 (TDDKKVLEAVAALVTLGYSEKEASKVINLCDKNNSLEQIIKEALKHLMK) is domain III.

It belongs to the RuvA family. As to quaternary structure, homotetramer. Forms an RuvA(8)-RuvB(12)-Holliday junction (HJ) complex. HJ DNA is sandwiched between 2 RuvA tetramers; dsDNA enters through RuvA and exits via RuvB. An RuvB hexamer assembles on each DNA strand where it exits the tetramer. Each RuvB hexamer is contacted by two RuvA subunits (via domain III) on 2 adjacent RuvB subunits; this complex drives branch migration. In the full resolvosome a probable DNA-RuvA(4)-RuvB(12)-RuvC(2) complex forms which resolves the HJ.

It localises to the cytoplasm. The RuvA-RuvB-RuvC complex processes Holliday junction (HJ) DNA during genetic recombination and DNA repair, while the RuvA-RuvB complex plays an important role in the rescue of blocked DNA replication forks via replication fork reversal (RFR). RuvA specifically binds to HJ cruciform DNA, conferring on it an open structure. The RuvB hexamer acts as an ATP-dependent pump, pulling dsDNA into and through the RuvAB complex. HJ branch migration allows RuvC to scan DNA until it finds its consensus sequence, where it cleaves and resolves the cruciform DNA. The polypeptide is Holliday junction branch migration complex subunit RuvA (Clostridium botulinum (strain Loch Maree / Type A3)).